The chain runs to 335 residues: Solute-binding protein Veis_3954 (335 aa).

The signal sequence occupies residues 1–34; it reads MPSTRPLPRPSSRSLRRLALGLGLAFGLGATAAA. Residues Gln-50, Glu-82, 155–158, Arg-179, and Asn-219 contribute to the (R)-pantoate site; that span reads NGFR.

This sequence belongs to the bacterial solute-binding protein 7 family. As to quaternary structure, the complex is comprised of an extracytoplasmic solute-binding protein and a heteromeric permease formed by two transmembrane proteins.

Its subcellular location is the periplasm. In terms of biological role, solute-binding protein that binds (R)-pantoate and D-erythronate (in vitro). Probably part of a tripartite ATP-independent periplasmic (TRAP) transport system that mediates solute transport into the cytoplasm. The chain is Solute-binding protein Veis_3954 from Verminephrobacter eiseniae (strain EF01-2).